A 332-amino-acid polypeptide reads, in one-letter code: Casein kinase II subunit alpha (332 aa).

The Protein kinase domain maps to 34 to 319 (YEVVRKVGRG…ALEAMTHPYF (286 aa)). ATP-binding positions include 40 to 48 (VGRGKYSEV) and Lys63. Asp151 serves as the catalytic Proton acceptor.

Belongs to the protein kinase superfamily. Ser/Thr protein kinase family. CK2 subfamily. Tetramer of two alpha and two beta chains (possible).

It catalyses the reaction L-seryl-[protein] + ATP = O-phospho-L-seryl-[protein] + ADP + H(+). It carries out the reaction L-threonyl-[protein] + ATP = O-phospho-L-threonyl-[protein] + ADP + H(+). Functionally, casein kinases are operationally defined by their preferential utilization of acidic proteins such as caseins as substrates. The alpha chain contains the catalytic site. The sequence is that of Casein kinase II subunit alpha (ACK2) from Zea mays (Maize).